Reading from the N-terminus, the 104-residue chain is NADH-quinone oxidoreductase subunit K (104 aa).

3 consecutive transmembrane segments (helical) span residues 4–24 (VPAS…LFGA), 31–51 (VIVL…LVAF), and 67–87 (LFTM…LIAL).

This sequence belongs to the complex I subunit 4L family. NDH-1 is composed of 14 different subunits. Subunits NuoA, H, J, K, L, M, N constitute the membrane sector of the complex.

The protein localises to the cell membrane. The enzyme catalyses a quinone + NADH + 5 H(+)(in) = a quinol + NAD(+) + 4 H(+)(out). NDH-1 shuttles electrons from NADH, via FMN and iron-sulfur (Fe-S) centers, to quinones in the respiratory chain. The immediate electron acceptor for the enzyme in this species is believed to be a menaquinone. Couples the redox reaction to proton translocation (for every two electrons transferred, four hydrogen ions are translocated across the cytoplasmic membrane), and thus conserves the redox energy in a proton gradient. This Bacillus mycoides (strain KBAB4) (Bacillus weihenstephanensis) protein is NADH-quinone oxidoreductase subunit K.